We begin with the raw amino-acid sequence, 191 residues long: Protein GrpE (191 aa).

Basic and acidic residues predominate over residues 1–10 (MNHEEQKVET). The interval 1–28 (MNHEEQKVETMEQVEAQPVEPTDVDSEV) is disordered.

This sequence belongs to the GrpE family. Homodimer.

Its subcellular location is the cytoplasm. In terms of biological role, participates actively in the response to hyperosmotic and heat shock by preventing the aggregation of stress-denatured proteins, in association with DnaK and GrpE. It is the nucleotide exchange factor for DnaK and may function as a thermosensor. Unfolded proteins bind initially to DnaJ; upon interaction with the DnaJ-bound protein, DnaK hydrolyzes its bound ATP, resulting in the formation of a stable complex. GrpE releases ADP from DnaK; ATP binding to DnaK triggers the release of the substrate protein, thus completing the reaction cycle. Several rounds of ATP-dependent interactions between DnaJ, DnaK and GrpE are required for fully efficient folding. The polypeptide is Protein GrpE (Aeromonas salmonicida (strain A449)).